Reading from the N-terminus, the 394-residue chain is Quinolinate synthase (394 aa).

Residues His57 and Ser74 each coordinate iminosuccinate. Cys121 provides a ligand contact to [4Fe-4S] cluster. Iminosuccinate-binding positions include 153 to 155 and Ser174; that span reads YMN. Cys250 contacts [4Fe-4S] cluster. Residues 276 to 278 and Thr293 each bind iminosuccinate; that span reads HPE. Position 340 (Cys340) interacts with [4Fe-4S] cluster.

Belongs to the quinolinate synthase family. Type 3 subfamily. [4Fe-4S] cluster is required as a cofactor.

The protein localises to the cytoplasm. It catalyses the reaction iminosuccinate + dihydroxyacetone phosphate = quinolinate + phosphate + 2 H2O + H(+). It participates in cofactor biosynthesis; NAD(+) biosynthesis; quinolinate from iminoaspartate: step 1/1. Catalyzes the condensation of iminoaspartate with dihydroxyacetone phosphate to form quinolinate. This chain is Quinolinate synthase, found in Nocardioides sp. (strain ATCC BAA-499 / JS614).